The chain runs to 198 residues: Recombination protein RecR (198 aa).

The segment at 57 to 72 (CQRCNTFSEAELCAIC) adopts a C4-type zinc-finger fold. One can recognise a Toprim domain in the interval 80-175 (DQLCIVEMPA…TVTRIARGMP (96 aa)).

This sequence belongs to the RecR family.

In terms of biological role, may play a role in DNA repair. It seems to be involved in an RecBC-independent recombinational process of DNA repair. It may act with RecF and RecO. The protein is Recombination protein RecR of Chromobacterium violaceum (strain ATCC 12472 / DSM 30191 / JCM 1249 / CCUG 213 / NBRC 12614 / NCIMB 9131 / NCTC 9757 / MK).